Here is a 604-residue protein sequence, read N- to C-terminus: Elongation factor 4 (604 aa).

Positions 7-189 (KNIRNFCIIA…QIVTKIPAPS (183 aa)) constitute a tr-type G domain. GTP-binding positions include 19–24 (DHGKST) and 136–139 (NKID).

It belongs to the TRAFAC class translation factor GTPase superfamily. Classic translation factor GTPase family. LepA subfamily.

The protein resides in the cell membrane. It carries out the reaction GTP + H2O = GDP + phosphate + H(+). Functionally, required for accurate and efficient protein synthesis under certain stress conditions. May act as a fidelity factor of the translation reaction, by catalyzing a one-codon backward translocation of tRNAs on improperly translocated ribosomes. Back-translocation proceeds from a post-translocation (POST) complex to a pre-translocation (PRE) complex, thus giving elongation factor G a second chance to translocate the tRNAs correctly. Binds to ribosomes in a GTP-dependent manner. The chain is Elongation factor 4 from Lachnospira eligens (strain ATCC 27750 / DSM 3376 / VPI C15-48 / C15-B4) (Eubacterium eligens).